The sequence spans 961 residues: Exportin-T (961 aa).

The protein belongs to the exportin family.

The protein resides in the cytoplasm. It localises to the nucleus. Mediates the nuclear export of aminoacylated tRNAs. This chain is Exportin-T (xpot), found in Danio rerio (Zebrafish).